Consider the following 77-residue polypeptide: Acyl carrier protein (77 aa).

One can recognise a Carrier domain in the interval 1 to 76 (MAVFDDVRDV…DVVNYIEKLG (76 aa)). Ser-36 is modified (O-(pantetheine 4'-phosphoryl)serine).

Belongs to the acyl carrier protein (ACP) family. 4'-phosphopantetheine is transferred from CoA to a specific serine of apo-ACP by AcpS. This modification is essential for activity because fatty acids are bound in thioester linkage to the sulfhydryl of the prosthetic group.

It localises to the cytoplasm. It functions in the pathway lipid metabolism; fatty acid biosynthesis. Functionally, carrier of the growing fatty acid chain in fatty acid biosynthesis. In Campylobacter curvus (strain 525.92), this protein is Acyl carrier protein.